Reading from the N-terminus, the 145-residue chain is Small ribosomal subunit protein bS6 (145 aa).

The segment covering 113 to 132 (ENMKKNERKAPKEPVKKDEE) has biased composition (basic and acidic residues). Positions 113 to 145 (ENMKKNERKAPKEPVKKDEEENKESEEEITSEE) are disordered. Acidic residues predominate over residues 133-145 (ENKESEEEITSEE).

This sequence belongs to the bacterial ribosomal protein bS6 family.

Functionally, binds together with bS18 to 16S ribosomal RNA. The protein is Small ribosomal subunit protein bS6 of Campylobacter hominis (strain ATCC BAA-381 / DSM 21671 / CCUG 45161 / LMG 19568 / NCTC 13146 / CH001A).